We begin with the raw amino-acid sequence, 78 residues long: Large ribosomal subunit protein bL28 (78 aa).

Belongs to the bacterial ribosomal protein bL28 family.

The protein is Large ribosomal subunit protein bL28 of Nostoc sp. (strain PCC 7120 / SAG 25.82 / UTEX 2576).